The chain runs to 43 residues: Defensin-A (43 aa).

3 disulfides stabilise this stretch: Cys-3/Cys-34, Cys-20/Cys-39, and Cys-24/Cys-41.

It localises to the secreted. Functionally, antibacterial protein. Strong activity against the Gram-positive bacteria M.luteus, B.megaterium and S.aureus. Reduced activity against Gram-positive bacterium B.subtilis and weak activity against Gram-negative bacterium X.japonicus. No detectable activity against the Gram-negative bacteria E.asbriae, E.coli, P.aeruginosa and S.marcescens. This Anomala cuprea (Cupreous chafer beetle) protein is Defensin-A.